The primary structure comprises 185 residues: Protein GrpE (185 aa).

A compositionally biased stretch (basic and acidic residues) spans 1–20; it reads MSQEKKEELQSEAQVTKEET. A disordered region spans residues 1–28; sequence MSQEKKEELQSEAQVTKEETPQANEAAA.

It belongs to the GrpE family. As to quaternary structure, homodimer.

Its subcellular location is the cytoplasm. In terms of biological role, participates actively in the response to hyperosmotic and heat shock by preventing the aggregation of stress-denatured proteins, in association with DnaK and GrpE. It is the nucleotide exchange factor for DnaK and may function as a thermosensor. Unfolded proteins bind initially to DnaJ; upon interaction with the DnaJ-bound protein, DnaK hydrolyzes its bound ATP, resulting in the formation of a stable complex. GrpE releases ADP from DnaK; ATP binding to DnaK triggers the release of the substrate protein, thus completing the reaction cycle. Several rounds of ATP-dependent interactions between DnaJ, DnaK and GrpE are required for fully efficient folding. The sequence is that of Protein GrpE from Sulfurimonas denitrificans (strain ATCC 33889 / DSM 1251) (Thiomicrospira denitrificans (strain ATCC 33889 / DSM 1251)).